The sequence spans 520 residues: Cobyric acid synthase (520 aa).

The GATase cobBQ-type domain occupies 257–451 (WLTVAAVRLP…VHGLLESDGF (195 aa)). Catalysis depends on Cys338, which acts as the Nucleophile. The active site involves His443.

The protein belongs to the CobB/CobQ family. CobQ subfamily.

The protein operates within cofactor biosynthesis; adenosylcobalamin biosynthesis. Functionally, catalyzes amidations at positions B, D, E, and G on adenosylcobyrinic A,C-diamide. NH(2) groups are provided by glutamine, and one molecule of ATP is hydrogenolyzed for each amidation. This Nocardia farcinica (strain IFM 10152) protein is Cobyric acid synthase.